The following is a 435-amino-acid chain: Nuclear hormone receptor family member nhr-14 (435 aa).

A DNA-binding region (nuclear receptor) is located at residues 17 to 92; the sequence is ADFCVVCGDK…DGMKPEAIQN (76 aa). NR C4-type zinc fingers lie at residues 20-40 and 56-80; these read CVVC…CNGC and CRFN…FQKC. Residues 91-126 form a disordered region; that stretch reads QNERDRIGSTKRRKRSGANSENNSDSEGTPSPKIEV. Over residues 107–119 the composition is skewed to polar residues; the sequence is GANSENNSDSEGT. The NR LBD domain maps to 131–355; that stretch reads VSRKLIEMLL…KRDTISPKIE (225 aa).

The protein belongs to the nuclear hormone receptor family. In terms of tissue distribution, expressed in intestine and head neurons in young adults.

The protein localises to the nucleus. In terms of biological role, orphan nuclear receptor. Transcriptional repressor of intestinal metal transporter smf-3 and genes of the innate immune response. Inhibits nuclear localization of transcription factor pqm-1; in response to pathogen stress, may facilitate translocation of pqm-1, leading to transcriptional activation of genes involved in innate immunity and iron uptake. This Caenorhabditis elegans protein is Nuclear hormone receptor family member nhr-14 (nhr-14).